A 647-amino-acid chain; its full sequence is DNA mismatch repair protein MutL (647 aa).

The tract at residues 346–378 (QTVHAPRSAAPRVSERASDEPPAWQPSPTSGEP) is disordered.

Belongs to the DNA mismatch repair MutL/HexB family.

This protein is involved in the repair of mismatches in DNA. It is required for dam-dependent methyl-directed DNA mismatch repair. May act as a 'molecular matchmaker', a protein that promotes the formation of a stable complex between two or more DNA-binding proteins in an ATP-dependent manner without itself being part of a final effector complex. The chain is DNA mismatch repair protein MutL from Limosilactobacillus fermentum (strain NBRC 3956 / LMG 18251) (Lactobacillus fermentum).